The chain runs to 547 residues: uncharacterized protein (547 aa).

The segment covering 38-50 (RNLPFHREREKVE) has biased composition (basic and acidic residues). The tract at residues 38–89 (RNLPFHREREKVESNPNSSDEEDLTSTNNTRSSDNTTSDTEDDSGEDSYQVE) is disordered. The span at 62–75 (TSTNNTRSSDNTTS) shows a compositional bias: low complexity. Helical transmembrane passes span 108–128 (IYTLLVASFIAIVITANSSIF), 148–168 (LCSATFLLGFAAGSVLFAPLS), 174–194 (LPLYSVTLVIFVVFQIGGGCS), 197–217 (IWSLVIFRFFHGFFGCTPMSA), 233–253 (GALLVFCAAAFVGPLVGPVMG), 265–285 (WDFWINMIWAGLTWVIVCFTM), 346–366 (MYLVFINILLYICMVGYPLIF), 377–397 (GLAILGILVGILLGLALTPII), 418–438 (LFPLFFGSFFIPIALFWLGWT), 445–465 (WAAPMVSGIFLGWGFLYVLAV), 478–500 (AASALSVATFTRYAAGGGMTIVA), and 514–534 (SLLAFVGCGLVPIPFIFFFWG).

It belongs to the major facilitator superfamily. CAR1 family.

It localises to the membrane. This is an uncharacterized protein from Schizosaccharomyces pombe (strain 972 / ATCC 24843) (Fission yeast).